The following is a 394-amino-acid chain: Cell adhesion molecule 3 (394 aa).

Positions 1 to 17 (MHHPVILLLCLSSLAGA) are cleaved as a signal peptide. Over 18 to 326 (ANLPPEDLSQ…PIPSTSSIDH (309 aa)) the chain is Extracellular. The Ig-like V-type domain maps to 22–120 (PEDLSQPVTA…PVRTAKAVVT (99 aa)). 2 cysteine pairs are disulfide-bonded: cysteine 45-cysteine 105 and cysteine 147-cysteine 204. 2 consecutive Ig-like C2-type domains span residues 128-223 (PQVS…HKIQ) and 228-306 (PTAK…TFIT). A disordered region spans residues 217–240 (SSSHKIQVQYKPTAKIESRPSMPR). The span at 230 to 240 (AKIESRPSMPR) shows a compositional bias: basic and acidic residues. Cysteine 249 and cysteine 295 are oxidised to a cystine. Residues 327–347 (AVIGGVVAVIAFLLFCLLIVL) form a helical membrane-spanning segment. Topologically, residues 348–394 (GRYLIRHKGTYLTHEAKGSDDAPDADTAIINAEGGQGGSDDKKEYFI) are cytoplasmic. The disordered stretch occupies residues 363 to 394 (AKGSDDAPDADTAIINAEGGQGGSDDKKEYFI).

Belongs to the nectin family.

It is found in the cell membrane. The protein resides in the cell junction. May be involved in cell-cell adhesion. This chain is Cell adhesion molecule 3 (cadm3), found in Xenopus laevis (African clawed frog).